The primary structure comprises 155 residues: MADLKQLMDNEVLMAFTSYATIILAKMMFLSSATAFQRLTNKVFANPEDCAGFGKGENAKKFLRTDEKVERVRRAHLNDLENIVPFLGIGLLYSLSGPDLSTALIHFRIFVGARIYHTIAYLTPLPQPNRGLAFFVGYGVTLSMAYRLLRSRLYL.

The Lumenal portion of the chain corresponds to D3–D9. A helical membrane pass occupies residues N10–A33. Topologically, residues T34 to F62 are cytoplasmic. A glutathione-binding site is contributed by R38. N6-acetyllysine is present on residues K42, K55, and K60. Residues L63–S96 traverse the membrane as a helical segment. Residues R73, R74, H76, and E81 each coordinate glutathione. Y93 is subject to 3'-nitrotyrosine; in vitro. The Lumenal portion of the chain corresponds to G97–D99. A helical transmembrane segment spans residues L100–T123. Y121 contacts glutathione. Over P124–P128 the chain is Cytoplasmic. Residues N129–L148 form a helical membrane-spanning segment. Over L149–L155 the chain is Lumenal.

Belongs to the MAPEG family. In terms of assembly, homotrimer; The trimer binds only one molecule of glutathione. In vitro, peroxynitrite induces nitration at Tyr-93 which activates the enzyme. Highest in the liver, followed by kidney and testis and much lower in seminal vesicles, spleen, lung and brain.

It localises to the endoplasmic reticulum membrane. It is found in the mitochondrion outer membrane. The catalysed reaction is RX + glutathione = an S-substituted glutathione + a halide anion + H(+). Its activity is regulated as follows. In vitro, can be activated by reagents that attack Cys-50 sulfhydryl, such as N-ethylmaleimide and via nitration of Tyr-93 by peroxynitrite. Functionally, conjugation of reduced glutathione to a wide number of exogenous and endogenous hydrophobic electrophiles. This Rattus norvegicus (Rat) protein is Microsomal glutathione S-transferase 1 (Mgst1).